We begin with the raw amino-acid sequence, 336 residues long: D-alanine--D-alanine ligase (336 aa).

The ATP-grasp domain occupies 124–330 (KMWFSALGVP…FTEYLIDVIG (207 aa)). 154-209 (AFDNWGSVFVKAASQGSSVGCYKVDVKANIANVLKDAFSYAPYVVVEQTIHARELE) lines the ATP pocket. Mg(2+) contacts are provided by Asp-284, Glu-297, and Asn-299.

The protein belongs to the D-alanine--D-alanine ligase family. Mg(2+) serves as cofactor. The cofactor is Mn(2+).

Its subcellular location is the cytoplasm. The catalysed reaction is 2 D-alanine + ATP = D-alanyl-D-alanine + ADP + phosphate + H(+). It functions in the pathway cell wall biogenesis; peptidoglycan biosynthesis. Functionally, cell wall formation. This chain is D-alanine--D-alanine ligase, found in Shewanella frigidimarina (strain NCIMB 400).